The following is a 232-amino-acid chain: Putative membrane protein ORF8 (232 aa).

Positions 71-84 are enriched in low complexity; the sequence is GSSAASIPSAPTPD. Positions 71–121 are disordered; sequence GSSAASIPSAPTPDATRESPTGEPHRDRALSTETPTPEPSRDGGSTPEVLH. 2 helical membrane passes run 166-182 and 195-211; these read VFAR…GSVA and LVVT…WVIV.

The protein resides in the membrane. The polypeptide is Putative membrane protein ORF8 (ORF8) (Ictalurid herpesvirus 1 (strain Auburn) (IcHV-1)).